The primary structure comprises 578 residues: Zinc finger protein 248 (578 aa).

One can recognise a KRAB domain in the interval 8–78; the sequence is VSFKDVCVDF…LEKGFPSQDP (71 aa). The segment at 239 to 263 adopts a C2H2-type 1; degenerate zinc-finger fold; the sequence is TVCKYNECGRTFIESLKLNISQRPH. Residue lysine 340 forms a Glycyl lysine isopeptide (Lys-Gly) (interchain with G-Cter in SUMO2) linkage. 7 C2H2-type zinc fingers span residues 379-401, 407-429, 435-457, 463-485, 491-513, 519-542, and 547-569; these read FECG…QRTH, YECT…QRTH, YECK…QRTH, YECN…QRTH, FICN…QRTH, YKCN…RTHT, and YECN…QRIH.

Belongs to the krueppel C2H2-type zinc-finger protein family.

It is found in the nucleus. In terms of biological role, may be involved in transcriptional regulation. The polypeptide is Zinc finger protein 248 (ZNF248) (Pongo abelii (Sumatran orangutan)).